The primary structure comprises 174 residues: Methylated protein MJ0556 (174 aa).

CBS domains lie at 28–87 (MISG…YLNV) and 91–156 (MLKN…IIKE).

In terms of processing, methylated at an undetermined residue between Ser-2 and Asp-26.

In Methanocaldococcus jannaschii (strain ATCC 43067 / DSM 2661 / JAL-1 / JCM 10045 / NBRC 100440) (Methanococcus jannaschii), this protein is Methylated protein MJ0556.